Reading from the N-terminus, the 217-residue chain is Peptide deformylase 1 (217 aa).

Positions 129 and 171 each coordinate Fe cation. Glu172 is an active-site residue. A Fe cation-binding site is contributed by His175.

The protein belongs to the polypeptide deformylase family. Fe(2+) serves as cofactor.

It carries out the reaction N-terminal N-formyl-L-methionyl-[peptide] + H2O = N-terminal L-methionyl-[peptide] + formate. In terms of biological role, removes the formyl group from the N-terminal Met of newly synthesized proteins. Requires at least a dipeptide for an efficient rate of reaction. N-terminal L-methionine is a prerequisite for activity but the enzyme has broad specificity at other positions. The chain is Peptide deformylase 1 from Bifidobacterium longum (strain NCC 2705).